A 74-amino-acid chain; its full sequence is U4-theraphotoxin-Cg1a (74 aa).

An N-terminal signal peptide occupies residues 1 to 19 (MNATIFALLLLLNLAMYNA). The propeptide occupies 20-39 (AEQSSETDMDDTLLIPEINR). 3 disulfide bridges follow: Cys-42-Cys-56, Cys-49-Cys-61, and Cys-55-Cys-71.

This sequence belongs to the neurotoxin 36 family. 01 subfamily. In terms of tissue distribution, expressed by the venom gland.

The protein localises to the secreted. Functionally, probable ion channel inhibitor. This Chilobrachys guangxiensis (Chinese earth tiger tarantula) protein is U4-theraphotoxin-Cg1a.